The sequence spans 462 residues: Argininosuccinate lyase (462 aa).

This sequence belongs to the lyase 1 family. Argininosuccinate lyase subfamily.

It localises to the cytoplasm. The catalysed reaction is 2-(N(omega)-L-arginino)succinate = fumarate + L-arginine. It participates in amino-acid biosynthesis; L-arginine biosynthesis; L-arginine from L-ornithine and carbamoyl phosphate: step 3/3. The chain is Argininosuccinate lyase from Bacillus cereus (strain ATCC 14579 / DSM 31 / CCUG 7414 / JCM 2152 / NBRC 15305 / NCIMB 9373 / NCTC 2599 / NRRL B-3711).